We begin with the raw amino-acid sequence, 82 residues long: Small ribosomal subunit protein bS16 (82 aa).

This sequence belongs to the bacterial ribosomal protein bS16 family.

This chain is Small ribosomal subunit protein bS16, found in Bdellovibrio bacteriovorus (strain ATCC 15356 / DSM 50701 / NCIMB 9529 / HD100).